Here is a 246-residue protein sequence, read N- to C-terminus: 3-deoxy-manno-octulosonate cytidylyltransferase (246 aa).

The protein belongs to the KdsB family.

It is found in the cytoplasm. The enzyme catalyses 3-deoxy-alpha-D-manno-oct-2-ulosonate + CTP = CMP-3-deoxy-beta-D-manno-octulosonate + diphosphate. The protein operates within nucleotide-sugar biosynthesis; CMP-3-deoxy-D-manno-octulosonate biosynthesis; CMP-3-deoxy-D-manno-octulosonate from 3-deoxy-D-manno-octulosonate and CTP: step 1/1. It functions in the pathway bacterial outer membrane biogenesis; lipopolysaccharide biosynthesis. Functionally, activates KDO (a required 8-carbon sugar) for incorporation into bacterial lipopolysaccharide in Gram-negative bacteria. This chain is 3-deoxy-manno-octulosonate cytidylyltransferase, found in Bradyrhizobium diazoefficiens (strain JCM 10833 / BCRC 13528 / IAM 13628 / NBRC 14792 / USDA 110).